Consider the following 534-residue polypeptide: Glucomannan 4-beta-mannosyltransferase 2 (534 aa).

The chain crosses the membrane as a helical span at residues 36–56; that stretch reads VIVPLLQLAVYICLLMSVMLL. Residue Asp-136 is part of the active site. Residues Asp-195 and Asp-197 each coordinate substrate. The active site involves Asp-289. The next 4 helical transmembrane spans lie at 368 to 388, 404 to 426, 483 to 503, and 509 to 529; these read IIAH…TILV, IITI…WILF, LNTL…YDFV, and YFIY…GWIG.

Belongs to the glycosyltransferase 2 family. Plant cellulose synthase-like A subfamily.

It is found in the golgi apparatus membrane. It catalyses the reaction GDP-mannose + (glucomannan)n = GDP + (glucomannan)n+1.. Its function is as follows. Possesses glucomannan synthase and mannan synthase activities in vitro. Mannan synthase consists of a 4-beta-mannosyltransferase activity on mannan using GDP-mannose. The beta-1,4-mannan product is the backbone for galactomannan synthesis by galactomannan galactosyltransferase. Galactomannan is a noncellulosic polysaccharides of plant cell wall. This Arabidopsis thaliana (Mouse-ear cress) protein is Glucomannan 4-beta-mannosyltransferase 2.